Consider the following 103-residue polypeptide: MGKLTLLLLALLVWLQYSLWFGKNGIHDYSRVADDVAVQQATNAKLKARNDQLFAEIDDLNGGQEAIEERARNELSMTKPGETFYRLVPDATKRAGGPAQNNR.

At M1–K3 the chain is on the cytoplasmic side. Residues L4 to F21 form a helical membrane-spanning segment. Residues G22–R103 are Periplasmic-facing. Positions V38–G62 form a coiled coil.

The protein belongs to the FtsB family. As to quaternary structure, part of a complex composed of FtsB, FtsL and FtsQ.

Its subcellular location is the cell inner membrane. Essential cell division protein. May link together the upstream cell division proteins, which are predominantly cytoplasmic, with the downstream cell division proteins, which are predominantly periplasmic. This Cronobacter sakazakii (strain ATCC BAA-894) (Enterobacter sakazakii) protein is Cell division protein FtsB.